We begin with the raw amino-acid sequence, 212 residues long: Large ribosomal subunit protein uL3 (212 aa).

Residues 135–156 (MTHGNSRSHRVPGSIGQNQSPG) are disordered. Gln153 carries the N5-methylglutamine modification.

The protein belongs to the universal ribosomal protein uL3 family. As to quaternary structure, part of the 50S ribosomal subunit. Forms a cluster with proteins L14 and L19. In terms of processing, methylated by PrmB.

Its function is as follows. One of the primary rRNA binding proteins, it binds directly near the 3'-end of the 23S rRNA, where it nucleates assembly of the 50S subunit. This is Large ribosomal subunit protein uL3 from Tolumonas auensis (strain DSM 9187 / NBRC 110442 / TA 4).